A 528-amino-acid chain; its full sequence is U3 small nucleolar RNA-associated protein 15 homolog (528 aa).

Ala-2 carries the post-translational modification N-acetylalanine. 7 WD repeats span residues 36–75 (KEFG…PVKT), 78–117 (RFKD…PLRQ), 120–159 (GHTK…EILT), 162–202 (EHSD…NVLC), 204–242 (EHGQ…QLLV), 246–285 (NHHK…VVHS), and 287–326 (DYAA…KKES). Lys-249 participates in a covalent cross-link: Glycyl lysine isopeptide (Lys-Gly) (interchain with G-Cter in SUMO2). Positions 508-528 (AELPEEKTESPRQPSDTDKNS) are disordered. The span at 511–528 (PEEKTESPRQPSDTDKNS) shows a compositional bias: basic and acidic residues.

As to quaternary structure, part of the small subunit (SSU) processome, composed of more than 70 proteins and the RNA chaperone small nucleolar RNA (snoRNA) U3. May be a component of the proposed t-UTP subcomplex of the ribosomal small subunit (SSU) processome containing at least UTP4, WDR43, HEATR1, UTP15, WDR75. Interacts directly with UTP4 and WDR43.

The protein localises to the nucleus. Its subcellular location is the nucleolus. Its function is as follows. Ribosome biogenesis factor. Involved in nucleolar processing of pre-18S ribosomal RNA. Required for optimal pre-ribosomal RNA transcription by RNA polymerase I. Part of the small subunit (SSU) processome, first precursor of the small eukaryotic ribosomal subunit. During the assembly of the SSU processome in the nucleolus, many ribosome biogenesis factors, an RNA chaperone and ribosomal proteins associate with the nascent pre-rRNA and work in concert to generate RNA folding, modifications, rearrangements and cleavage as well as targeted degradation of pre-ribosomal RNA by the RNA exosome. This is U3 small nucleolar RNA-associated protein 15 homolog from Rattus norvegicus (Rat).